Reading from the N-terminus, the 246-residue chain is tRNA pseudouridine synthase A (246 aa).

Aspartate 52 serves as the catalytic Nucleophile. Tyrosine 111 serves as a coordination point for substrate.

The protein belongs to the tRNA pseudouridine synthase TruA family. Homodimer.

It catalyses the reaction uridine(38/39/40) in tRNA = pseudouridine(38/39/40) in tRNA. Functionally, formation of pseudouridine at positions 38, 39 and 40 in the anticodon stem and loop of transfer RNAs. The polypeptide is tRNA pseudouridine synthase A (Ehrlichia ruminantium (strain Welgevonden)).